Here is a 31-residue protein sequence, read N- to C-terminus: Cytochrome b6-f complex subunit 6 (31 aa).

A helical membrane pass occupies residues isoleucine 4–glycine 24.

It belongs to the PetL family. In terms of assembly, the 4 large subunits of the cytochrome b6-f complex are cytochrome b6, subunit IV (17 kDa polypeptide, PetD), cytochrome f and the Rieske protein, while the 4 small subunits are PetG, PetL, PetM and PetN. The complex functions as a dimer.

It localises to the plastid. Its subcellular location is the chloroplast thylakoid membrane. Its function is as follows. Component of the cytochrome b6-f complex, which mediates electron transfer between photosystem II (PSII) and photosystem I (PSI), cyclic electron flow around PSI, and state transitions. PetL is important for photoautotrophic growth as well as for electron transfer efficiency and stability of the cytochrome b6-f complex. In Ficus carica (Common fig), this protein is Cytochrome b6-f complex subunit 6.